Here is a 369-residue protein sequence, read N- to C-terminus: Aminomethyltransferase (369 aa).

Belongs to the GcvT family. The glycine cleavage system is composed of four proteins: P, T, L and H.

It catalyses the reaction N(6)-[(R)-S(8)-aminomethyldihydrolipoyl]-L-lysyl-[protein] + (6S)-5,6,7,8-tetrahydrofolate = N(6)-[(R)-dihydrolipoyl]-L-lysyl-[protein] + (6R)-5,10-methylene-5,6,7,8-tetrahydrofolate + NH4(+). Functionally, the glycine cleavage system catalyzes the degradation of glycine. This Xanthomonas oryzae pv. oryzae (strain MAFF 311018) protein is Aminomethyltransferase.